Here is an 89-residue protein sequence, read N- to C-terminus: Small ribosomal subunit protein uS15 (89 aa).

Belongs to the universal ribosomal protein uS15 family. In terms of assembly, part of the 30S ribosomal subunit. Forms a bridge to the 50S subunit in the 70S ribosome, contacting the 23S rRNA.

Functionally, one of the primary rRNA binding proteins, it binds directly to 16S rRNA where it helps nucleate assembly of the platform of the 30S subunit by binding and bridging several RNA helices of the 16S rRNA. In terms of biological role, forms an intersubunit bridge (bridge B4) with the 23S rRNA of the 50S subunit in the ribosome. In Shewanella sp. (strain ANA-3), this protein is Small ribosomal subunit protein uS15.